We begin with the raw amino-acid sequence, 302 residues long: Surfeit locus protein 4 homolog (302 aa).

The next 6 membrane-spanning stretches (helical) occupy residues 95-115 (APLL…LVVF), 120-140 (AYAI…YGLI), 193-213 (VLLI…ISWT), 215-235 (ILVH…FKAK), 236-256 (FFAA…NSFW), and 271-291 (DFFQ…TGPG). The short motif at 299–302 (KKIY) is the Di-lysine motif element.

It belongs to the SURF4 family.

Its subcellular location is the endoplasmic reticulum membrane. This chain is Surfeit locus protein 4 homolog, found in Schizosaccharomyces pombe (strain 972 / ATCC 24843) (Fission yeast).